Here is a 104-residue protein sequence, read N- to C-terminus: Small ribosomal subunit protein uS10 (104 aa).

This sequence belongs to the universal ribosomal protein uS10 family. As to quaternary structure, part of the 30S ribosomal subunit.

In terms of biological role, involved in the binding of tRNA to the ribosomes. The chain is Small ribosomal subunit protein uS10 from Alkaliphilus oremlandii (strain OhILAs) (Clostridium oremlandii (strain OhILAs)).